A 168-amino-acid chain; its full sequence is Mitochondrial ATP-independent inner membrane protease subunit 1a (168 aa).

Residues 1–47 (MRMTFLSYLKQWRGTAKEAFENVSIVAKFLCLLHVTDRYIISTTHVH) constitute a mitochondrion transit peptide. Residues Ser-50 and Lys-94 contribute to the active site.

Belongs to the peptidase S26 family. IMP1 subfamily. In terms of assembly, heterodimer of 2 subunits, IMP1A/B and IMP12.

The protein resides in the mitochondrion inner membrane. Functionally, catalyzes the removal of transit peptides required for the targeting of proteins from the mitochondrial matrix, across the inner membrane, into the inter-membrane space. The sequence is that of Mitochondrial ATP-independent inner membrane protease subunit 1a from Arabidopsis thaliana (Mouse-ear cress).